The primary structure comprises 937 residues: Valine--tRNA ligase (937 aa).

Residues Pro44–His54 carry the 'HIGH' region motif. Residues Lys548–Ser552 carry the 'KMSKS' region motif. An ATP-binding site is contributed by Lys551. Residues Ala874–Ala937 are a coiled coil.

The protein belongs to the class-I aminoacyl-tRNA synthetase family. ValS type 1 subfamily. As to quaternary structure, monomer.

Its subcellular location is the cytoplasm. It carries out the reaction tRNA(Val) + L-valine + ATP = L-valyl-tRNA(Val) + AMP + diphosphate. In terms of biological role, catalyzes the attachment of valine to tRNA(Val). As ValRS can inadvertently accommodate and process structurally similar amino acids such as threonine, to avoid such errors, it has a 'posttransfer' editing activity that hydrolyzes mischarged Thr-tRNA(Val) in a tRNA-dependent manner. This Laribacter hongkongensis (strain HLHK9) protein is Valine--tRNA ligase.